A 557-amino-acid chain; its full sequence is Hydroxylamine reductase (557 aa).

The [4Fe-4S] cluster site is built by Cys4, Cys7, Cys19, and Cys26. Residues His253, Glu277, Cys321, Cys408, Cys436, Cys461, Glu495, and Lys497 each coordinate hybrid [4Fe-2O-2S] cluster. Residue Cys408 is modified to Cysteine persulfide.

The protein belongs to the HCP family. [4Fe-4S] cluster is required as a cofactor. Requires hybrid [4Fe-2O-2S] cluster as cofactor.

Its subcellular location is the cytoplasm. The catalysed reaction is A + NH4(+) + H2O = hydroxylamine + AH2 + H(+). Functionally, catalyzes the reduction of hydroxylamine to form NH(3) and H(2)O. The chain is Hydroxylamine reductase from Acidithiobacillus ferrooxidans (strain ATCC 53993 / BNL-5-31) (Leptospirillum ferrooxidans (ATCC 53993)).